The sequence spans 63 residues: Large ribosomal subunit protein bL28 (63 aa).

The protein belongs to the bacterial ribosomal protein bL28 family.

The chain is Large ribosomal subunit protein bL28 from Syntrophotalea carbinolica (strain DSM 2380 / NBRC 103641 / GraBd1) (Pelobacter carbinolicus).